The chain runs to 147 residues: MVHFTAEEKSTILSLWGKVNVEEAGGEALGRLLVVYPWTQRFFDNFGNLSSASAILGNPKVKAHGKKVLTSFGEAVKNMDNLKGAFAKLSELHCDKLHVDPENFKLLGNVMVIILATHFGKEFTPDVQAAWQKLVSGVATALAHKYH.

Residues 3–147 (HFTAEEKSTI…VATALAHKYH (145 aa)) enclose the Globin domain. Residues Ser-14 and Ser-51 each carry the phosphoserine modification. Positions 64 and 93 each coordinate heme b.

It belongs to the globin family. Heterotetramer of two alpha chains and two epsilon chains in early embryonic hemoglobin Gower-2; two zeta chains and two epsilon chains in early embryonic hemoglobin Gower-1. Red blood cells.

Functionally, the epsilon chain is a beta-type chain of early mammalian embryonic hemoglobin. The polypeptide is Hemoglobin subunit epsilon (HBE1) (Eulemur fulvus fulvus (Brown lemur)).